A 293-amino-acid chain; its full sequence is 4-hydroxy-tetrahydrodipicolinate synthase (293 aa).

T47 provides a ligand contact to pyruvate. Y136 acts as the Proton donor/acceptor in catalysis. K164 (schiff-base intermediate with substrate) is an active-site residue. I206 contributes to the pyruvate binding site.

The protein belongs to the DapA family. In terms of assembly, homotetramer; dimer of dimers.

It localises to the cytoplasm. It catalyses the reaction L-aspartate 4-semialdehyde + pyruvate = (2S,4S)-4-hydroxy-2,3,4,5-tetrahydrodipicolinate + H2O + H(+). It functions in the pathway amino-acid biosynthesis; L-lysine biosynthesis via DAP pathway; (S)-tetrahydrodipicolinate from L-aspartate: step 3/4. In terms of biological role, catalyzes the condensation of (S)-aspartate-beta-semialdehyde [(S)-ASA] and pyruvate to 4-hydroxy-tetrahydrodipicolinate (HTPA). The polypeptide is 4-hydroxy-tetrahydrodipicolinate synthase (Listeria monocytogenes serovar 1/2a (strain ATCC BAA-679 / EGD-e)).